A 252-amino-acid chain; its full sequence is Imidazole glycerol phosphate synthase subunit HisF (252 aa).

Residues Asp-11 and Asp-130 contribute to the active site.

The protein belongs to the HisA/HisF family. As to quaternary structure, heterodimer of HisH and HisF.

The protein resides in the cytoplasm. It catalyses the reaction 5-[(5-phospho-1-deoxy-D-ribulos-1-ylimino)methylamino]-1-(5-phospho-beta-D-ribosyl)imidazole-4-carboxamide + L-glutamine = D-erythro-1-(imidazol-4-yl)glycerol 3-phosphate + 5-amino-1-(5-phospho-beta-D-ribosyl)imidazole-4-carboxamide + L-glutamate + H(+). It functions in the pathway amino-acid biosynthesis; L-histidine biosynthesis; L-histidine from 5-phospho-alpha-D-ribose 1-diphosphate: step 5/9. IGPS catalyzes the conversion of PRFAR and glutamine to IGP, AICAR and glutamate. The HisF subunit catalyzes the cyclization activity that produces IGP and AICAR from PRFAR using the ammonia provided by the HisH subunit. In Staphylococcus saprophyticus subsp. saprophyticus (strain ATCC 15305 / DSM 20229 / NCIMB 8711 / NCTC 7292 / S-41), this protein is Imidazole glycerol phosphate synthase subunit HisF.